We begin with the raw amino-acid sequence, 1242 residues long: ATP-dependent RNA helicase DHX8 (1242 aa).

2 disordered regions span residues 75 to 283 and 354 to 449; these read RPSR…DDPE and SMKE…GLLP. Basic and acidic residues-rich tracts occupy residues 87–97, 113–141, and 180–196; these read TVGDKKEDKKS, YSKK…KTDM, and RDRD…DRHS. 2 stretches are compositionally biased toward basic residues: residues 197 to 222 and 232 to 252; these read DRRR…RRSR and DRRH…RSRS. The segment covering 253 to 269 has biased composition (basic and acidic residues); the sequence is RSTERRDRRDRSRDCSE. Positions 285-356 constitute an S1 motif domain; sequence GKIYSGKIAN…TGQKVSLSMK (72 aa). The segment covering 388-399 has biased composition (polar residues); that stretch reads FSSSTSMLNLQG. The span at 439-449 shows a compositional bias: acidic residues; sequence PDFDEETGLLP. Residues 596–759 enclose the Helicase ATP-binding domain; the sequence is IKAVTDNQIL…FFKAPIFTIP (164 aa). 609–616 lines the ATP pocket; the sequence is GETGSGKT. The DEAH box motif lies at 706-709; that stretch reads DEAH. Positions 777 to 957 constitute a Helicase C-terminal domain; that stretch reads YLDASLITVM…TTVLQLKTMG (181 aa).

This sequence belongs to the DEAD box helicase family. DEAH subfamily. DDX8/PRP22 sub-subfamily. Identified in the spliceosome C complex.

The protein localises to the nucleus. The catalysed reaction is ATP + H2O = ADP + phosphate + H(+). Functionally, involved in pre-mRNA splicing as component of the spliceosome. Facilitates nuclear export of spliced mRNA by releasing the RNA from the spliceosome. Before and after egg-chamber formation, required for nurse-cell chromatin dispersal (NCCD) probably by playing a role in spliceosome localization to chromatin/interchromatin spaces. This is ATP-dependent RNA helicase DHX8 from Drosophila melanogaster (Fruit fly).